Consider the following 971-residue polypeptide: Serine/threonine-protein kinase CLA4 (971 aa).

The tract at residues 1–40 (MTSIYTSDLKNHRRAPPPPNGAAGSGSGSGSGSGSGSGSL) is disordered. Gly residues predominate over residues 23–37 (AGSGSGSGSGSGSGS). The PH domain occupies 67–178 (SKRQSGWVHV…WLDAFTTKCP (112 aa)). Positions 201–221 (LTNGSLNGNSSSSPTSGLLSS) are disordered. The region spanning 231-244 (VSGPINFTHKVHVG) is the CRIB domain. 2 disordered regions span residues 292–517 (GGNS…KIHP) and 554–653 (SKKS…QLKK). Composition is skewed to low complexity over residues 307–326 (NSKT…TKNN) and 365–404 (LNGS…PLNN). The segment covering 423-433 (SGTSSDTYSNK) has biased composition (polar residues). The span at 434–448 (NHQDRSGYEQQRQQR) shows a compositional bias: basic and acidic residues. The span at 449–482 (TDSSQQQQQQKQHQYQQKSQQQQQQPQQPLSSHQ) shows a compositional bias: low complexity. Positions 491–500 (QVPPTLPSSG) are enriched in pro residues. Low complexity predominate over residues 554-578 (SKKSQQQLASKQPSPPSSQQQQQKP). The segment covering 617 to 630 (NETSGVSKTPSPTD) has biased composition (polar residues). The region spanning 680–935 (FRIVEKAGQG…TDELLEHSFI (256 aa)) is the Protein kinase domain. ATP contacts are provided by residues 686 to 694 (AGQGASGNV) and K710. Residue D803 is the Proton acceptor of the active site.

Belongs to the protein kinase superfamily. STE Ser/Thr protein kinase family. STE20 subfamily.

It carries out the reaction L-seryl-[protein] + ATP = O-phospho-L-seryl-[protein] + ADP + H(+). The catalysed reaction is L-threonyl-[protein] + ATP = O-phospho-L-threonyl-[protein] + ADP + H(+). Its function is as follows. Essential for virulence and morphological switching (hyphal formation) of C.albicans. This Candida albicans (Yeast) protein is Serine/threonine-protein kinase CLA4 (CLA4).